The sequence spans 111 residues: MIQVLLVIICLAVFPYQGSCIILESGNVNDYEIVYPKKLIVLPTGAMNSPHPCCDPVTCKPKKGEHCISGPCCRNCKFINSGTICKRARGDDMNDYCTGTTPDCPRNPYKD.

The first 20 residues, 1–20, serve as a signal peptide directing secretion; that stretch reads MIQVLLVIICLAVFPYQGSC. The propeptide occupies 21-47; it reads IILESGNVNDYEIVYPKKLIVLPTGAM. The Disintegrin domain occupies 47–111; the sequence is MNSPHPCCDP…PDCPRNPYKD (65 aa). 4 disulfide bridges follow: Cys53–Cys76, Cys67–Cys73, Cys72–Cys97, and Cys85–Cys104. Positions 89-91 match the Cell attachment site motif; sequence RGD.

Heterodimer; disulfide-linked.

Its subcellular location is the secreted. Functionally, inhibits ADP-induced platelet aggregation in human platelet-rich plasma (IC(50) is 8 uM). The polypeptide is Disintegrin DS-AS (Atheris squamigera (Variable bush viper)).